Here is a 425-residue protein sequence, read N- to C-terminus: Interferon regulatory factor 8 (425 aa).

Positions 7-114 (GRRLRQWLIE…EPYKVYRIVP (108 aa)) form a DNA-binding region, IRF tryptophan pentad repeat.

This sequence belongs to the IRF family.

It is found in the nucleus. The protein localises to the cytoplasm. Its function is as follows. Plays a role as a transcriptional activator or repressor. Specifically binds to the upstream regulatory region of type I IFN and IFN-inducible MHC class I genes (the interferon consensus sequence (ICS)). Plays a regulatory role in cells of the immune system. This chain is Interferon regulatory factor 8 (IRF8), found in Gallus gallus (Chicken).